We begin with the raw amino-acid sequence, 367 residues long: Germination protease (367 aa).

Residues 1-15 (MKEPLDLSKYAVRTD) constitute a propeptide that is removed on maturation.

It belongs to the peptidase A25 family. Homotetramer. Autoproteolytically processed. The inactive tetrameric zymogen termed p46 autoprocesses to a smaller form termed p41, which is active only during spore germination.

The catalysed reaction is Endopeptidase action with P4 Glu or Asp, P1 preferably Glu &gt; Asp, P1' hydrophobic and P2' Ala.. Functionally, initiates the rapid degradation of small, acid-soluble proteins during spore germination. The protein is Germination protease of Bacillus cytotoxicus (strain DSM 22905 / CIP 110041 / 391-98 / NVH 391-98).